Here is a 279-residue protein sequence, read N- to C-terminus: Shikimate dehydrogenase (NADP(+)) (279 aa).

Shikimate is bound by residues 17 to 19 (SLS) and threonine 64. The active-site Proton acceptor is lysine 68. Aspartate 80 contacts NADP(+). Asparagine 89 and aspartate 105 together coordinate shikimate. Residues 129-133 (GAGGS), 153-158 (NRTAKK), and leucine 221 each bind NADP(+). Tyrosine 223 is a binding site for shikimate. Glycine 245 lines the NADP(+) pocket.

Belongs to the shikimate dehydrogenase family. In terms of assembly, homodimer.

The enzyme catalyses shikimate + NADP(+) = 3-dehydroshikimate + NADPH + H(+). Its pathway is metabolic intermediate biosynthesis; chorismate biosynthesis; chorismate from D-erythrose 4-phosphate and phosphoenolpyruvate: step 4/7. Involved in the biosynthesis of the chorismate, which leads to the biosynthesis of aromatic amino acids. Catalyzes the reversible NADPH linked reduction of 3-dehydroshikimate (DHSA) to yield shikimate (SA). The protein is Shikimate dehydrogenase (NADP(+)) of Idiomarina loihiensis (strain ATCC BAA-735 / DSM 15497 / L2-TR).